Here is a 402-residue protein sequence, read N- to C-terminus: Ketol-acid reductoisomerase, mitochondrial (402 aa).

The N-terminal 26 residues, 1–26 (MAARNCTKALRPLARQLATPAVQRRT), are a transit peptide targeting the mitochondrion. In terms of domain architecture, KARI N-terminal Rossmann spans 63-252 (KEEVHERADW…AVGSGYLYET (190 aa)). NADP(+) contacts are provided by residues 90–99 (GYGSQGHGQG), 114–119 (RKNGKS), and 152–156 (SDAAQ). His-177 is an active-site residue. The region spanning 253 to 400 (TFEKEVYSDL…KAVRSLRPEN (148 aa)) is the KARI C-terminal knotted domain. Mg(2+)-binding residues include Asp-261, Glu-265, Glu-297, and Glu-301. Ser-323 lines the substrate pocket.

Belongs to the ketol-acid reductoisomerase family. It depends on Mg(2+) as a cofactor.

The protein resides in the mitochondrion. It carries out the reaction (2R)-2,3-dihydroxy-3-methylbutanoate + NADP(+) = (2S)-2-acetolactate + NADPH + H(+). The enzyme catalyses (2R,3R)-2,3-dihydroxy-3-methylpentanoate + NADP(+) = (S)-2-ethyl-2-hydroxy-3-oxobutanoate + NADPH + H(+). Its pathway is amino-acid biosynthesis; L-isoleucine biosynthesis; L-isoleucine from 2-oxobutanoate: step 2/4. It functions in the pathway amino-acid biosynthesis; L-valine biosynthesis; L-valine from pyruvate: step 2/4. This Neurospora crassa (strain ATCC 24698 / 74-OR23-1A / CBS 708.71 / DSM 1257 / FGSC 987) protein is Ketol-acid reductoisomerase, mitochondrial (ilv-2).